The following is a 446-amino-acid chain: Thymidine phosphorylase (446 aa).

The protein belongs to the thymidine/pyrimidine-nucleoside phosphorylase family. Homodimer.

The enzyme catalyses thymidine + phosphate = 2-deoxy-alpha-D-ribose 1-phosphate + thymine. It functions in the pathway pyrimidine metabolism; dTMP biosynthesis via salvage pathway; dTMP from thymine: step 1/2. Its function is as follows. The enzymes which catalyze the reversible phosphorolysis of pyrimidine nucleosides are involved in the degradation of these compounds and in their utilization as carbon and energy sources, or in the rescue of pyrimidine bases for nucleotide synthesis. The chain is Thymidine phosphorylase from Idiomarina loihiensis (strain ATCC BAA-735 / DSM 15497 / L2-TR).